A 214-amino-acid chain; its full sequence is Ribosomal RNA small subunit methyltransferase G (214 aa).

S-adenosyl-L-methionine is bound by residues glycine 78, leucine 83, 129-130 (AE), and arginine 144.

It belongs to the methyltransferase superfamily. RNA methyltransferase RsmG family.

It localises to the cytoplasm. The catalysed reaction is guanosine(527) in 16S rRNA + S-adenosyl-L-methionine = N(7)-methylguanosine(527) in 16S rRNA + S-adenosyl-L-homocysteine. Its function is as follows. Specifically methylates the N7 position of guanine in position 527 of 16S rRNA. This Marinobacter nauticus (strain ATCC 700491 / DSM 11845 / VT8) (Marinobacter aquaeolei) protein is Ribosomal RNA small subunit methyltransferase G.